A 541-amino-acid chain; its full sequence is uncharacterized protein (541 aa).

An N-terminal signal peptide occupies residues Met-1 to Ala-17. 2 disordered regions span residues Thr-28–Thr-47 and Gly-103–Leu-138. The segment covering Gly-103 to Ala-116 has biased composition (basic and acidic residues). The residue at position 118 (Thr-118) is a Phosphothreonine. Glycyl lysine isopeptide (Lys-Gly) (interchain with G-Cter in SUMO2) cross-links involve residues Lys-128 and Lys-223. Residue Ser-226 is modified to Phosphoserine. Residues Ala-232–Glu-243 show a composition bias toward polar residues. The tract at residues Ala-232–Glu-254 is disordered. 2 positions are modified to phosphoserine: Ser-286 and Ser-429. The tract at residues Tyr-494 to Leu-526 is disordered.

The protein localises to the secreted. This is an uncharacterized protein from Mus musculus (Mouse).